Here is a 400-residue protein sequence, read N- to C-terminus: S-adenosylmethionine decarboxylase proenzyme (400 aa).

Active-site residues include E18 and E21. S78 acts as the Schiff-base intermediate with substrate; via pyruvic acid in catalysis. At S78 the chain carries Pyruvic acid (Ser); by autocatalysis. The Proton donor; for catalytic activity role is filled by C92. Residues S243 and H256 each act as proton acceptor; for processing activity in the active site.

This sequence belongs to the eukaryotic AdoMetDC family. Pyruvate is required as a cofactor. Is synthesized initially as an inactive proenzyme. Formation of the active enzyme involves a self-maturation process in which the active site pyruvoyl group is generated from an internal serine residue via an autocatalytic post-translational modification. Two non-identical subunits are generated from the proenzyme in this reaction, and the pyruvate is formed at the N-terminus of the alpha chain, which is derived from the carboxyl end of the proenzyme. The post-translation cleavage follows an unusual pathway, termed non-hydrolytic serinolysis, in which the side chain hydroxyl group of the serine supplies its oxygen atom to form the C-terminus of the beta chain, while the remainder of the serine residue undergoes an oxidative deamination to produce ammonia and the pyruvoyl group blocking the N-terminus of the alpha chain.

The catalysed reaction is S-adenosyl-L-methionine + H(+) = S-adenosyl 3-(methylsulfanyl)propylamine + CO2. The protein operates within amine and polyamine biosynthesis; S-adenosylmethioninamine biosynthesis; S-adenosylmethioninamine from S-adenosyl-L-methionine: step 1/1. This chain is S-adenosylmethionine decarboxylase proenzyme (SAMDC), found in Zea mays (Maize).